The following is a 1114-amino-acid chain: Probable guanine nucleotide exchange factor MCF2L2 (1114 aa).

The 183-residue stretch at 11–193 folds into the CRAL-TRIO domain; the sequence is PQELTRRLAT…ELGGTLEYRH (183 aa). The Spectrin repeat unit spans residues 323–428; sequence QHFEHDFCKA…KWDILGKSLE (106 aa). Residues 530-614 are disordered; it reads QTRPVQPVAP…NPELEQQARL (85 aa). The segment covering 546 to 559 has biased composition (polar residues); it reads KWVSSKTSQPSTSV. A compositionally biased stretch (basic and acidic residues) spans 577–606; it reads LNSRGKEDDETKFEVKSEEIFESHHERGNP. A DH domain is found at 619 to 822; the sequence is PRRRIIRDLL…EDLIKSCELA (204 aa). The PH domain occupies 834–954; it reads DIGKLGKLLL…WFSEISKLLM (121 aa). Over residues 962–975 the composition is skewed to polar residues; that stretch reads DQGNPQFEMSTSKG. The segment at 962-1114 is disordered; it reads DQGNPQFEMS…LRPRTSAQES (153 aa). Positions 986–997 are enriched in basic and acidic residues; it reads NMERATTSKEDP. Residues 1017 to 1028 show a composition bias toward acidic residues; that stretch reads TFEDCEGAEDME. 2 stretches are compositionally biased toward basic and acidic residues: residues 1043 to 1067 and 1074 to 1084; these read DDSH…GEKE and TATRSTEEERA.

It belongs to the MCF2 family. As to expression, significantly expressed in brain and modestly in pancreas, brain and testis.

Its function is as follows. Probably functions as a guanine nucleotide exchange factor. This Homo sapiens (Human) protein is Probable guanine nucleotide exchange factor MCF2L2 (MCF2L2).